A 240-amino-acid polypeptide reads, in one-letter code: Ubiquinone biosynthesis O-methyltransferase (240 aa).

Positions 44, 64, 85, and 129 each coordinate S-adenosyl-L-methionine.

Belongs to the methyltransferase superfamily. UbiG/COQ3 family.

The catalysed reaction is a 3-demethylubiquinol + S-adenosyl-L-methionine = a ubiquinol + S-adenosyl-L-homocysteine + H(+). It catalyses the reaction a 3-(all-trans-polyprenyl)benzene-1,2-diol + S-adenosyl-L-methionine = a 2-methoxy-6-(all-trans-polyprenyl)phenol + S-adenosyl-L-homocysteine + H(+). Its pathway is cofactor biosynthesis; ubiquinone biosynthesis. O-methyltransferase that catalyzes the 2 O-methylation steps in the ubiquinone biosynthetic pathway. This chain is Ubiquinone biosynthesis O-methyltransferase, found in Escherichia fergusonii (strain ATCC 35469 / DSM 13698 / CCUG 18766 / IAM 14443 / JCM 21226 / LMG 7866 / NBRC 102419 / NCTC 12128 / CDC 0568-73).